A 943-amino-acid chain; its full sequence is AP-1 complex subunit beta-1 (943 aa).

At lysine 318 the chain carries N6-acetyllysine. The residue at position 574 (tyrosine 574) is a 3'-nitrotyrosine. Positions glycine 584–valine 621 are disordered. Residues proline 594 to glycine 616 are compositionally biased toward low complexity.

This sequence belongs to the adaptor complexes large subunit family. As to quaternary structure, adaptor protein complex 1 (AP-1) is a heterotetramer composed of two large adaptins (gamma-type subunit AP1G1 and beta-type subunit AP1B1), a medium adaptin (mu-type subunit AP1M1 or AP1M2) and a small adaptin (sigma-type subunit AP1S1 or AP1S2 or AP1S3). In terms of tissue distribution, widely expressed.

The protein localises to the cytoplasmic vesicle. It localises to the clathrin-coated vesicle membrane. The protein resides in the golgi apparatus. In terms of biological role, subunit of clathrin-associated adaptor protein complex 1 that plays a role in protein sorting in the late-Golgi/trans-Golgi network (TGN) and/or endosomes. The AP complexes mediate both the recruitment of clathrin to membranes and the recognition of sorting signals within the cytosolic tails of transmembrane cargo molecules. This is AP-1 complex subunit beta-1 (Ap1b1) from Mus musculus (Mouse).